The chain runs to 289 residues: Glycine--tRNA ligase alpha subunit (289 aa).

This sequence belongs to the class-II aminoacyl-tRNA synthetase family. In terms of assembly, tetramer of two alpha and two beta subunits.

Its subcellular location is the cytoplasm. It carries out the reaction tRNA(Gly) + glycine + ATP = glycyl-tRNA(Gly) + AMP + diphosphate. This Nitratidesulfovibrio vulgaris (strain ATCC 29579 / DSM 644 / CCUG 34227 / NCIMB 8303 / VKM B-1760 / Hildenborough) (Desulfovibrio vulgaris) protein is Glycine--tRNA ligase alpha subunit.